Consider the following 275-residue polypeptide: Large ribosomal subunit protein uL2c (275 aa).

The segment at 219–267 is disordered; that stretch reads TVRGSVMNPCDHPHGGGEGRTPIGRTRPLTPWGKPALGKKTRKTKKLSS. Over residues 255-264 the composition is skewed to basic residues; sequence LGKKTRKTKK.

This sequence belongs to the universal ribosomal protein uL2 family. As to quaternary structure, part of the 50S ribosomal subunit.

The protein localises to the plastid. It localises to the chloroplast. The sequence is that of Large ribosomal subunit protein uL2c (rpl2) from Thalassiosira pseudonana (Marine diatom).